The chain runs to 290 residues: tRNA(Ile)-lysidine synthase (290 aa).

Residue 12–17 (SGGSDS) coordinates ATP.

It belongs to the tRNA(Ile)-lysidine synthase family.

The protein localises to the cytoplasm. The enzyme catalyses cytidine(34) in tRNA(Ile2) + L-lysine + ATP = lysidine(34) in tRNA(Ile2) + AMP + diphosphate + H(+). Its function is as follows. Ligates lysine onto the cytidine present at position 34 of the AUA codon-specific tRNA(Ile) that contains the anticodon CAU, in an ATP-dependent manner. Cytidine is converted to lysidine, thus changing the amino acid specificity of the tRNA from methionine to isoleucine. The sequence is that of tRNA(Ile)-lysidine synthase from Mycoplasma genitalium (strain ATCC 33530 / DSM 19775 / NCTC 10195 / G37) (Mycoplasmoides genitalium).